A 415-amino-acid chain; its full sequence is D-serine dehydratase (415 aa).

Residue K68 is modified to N6-(pyridoxal phosphate)lysine. Positions 204, 211, 253, 279, and 280 each coordinate pyridoxal 5'-phosphate. Zn(2+) is bound by residues H385 and C387.

It belongs to the DSD1 family. As to quaternary structure, homodimer. Requires pyridoxal 5'-phosphate as cofactor. The cofactor is Zn(2+).

The protein localises to the cytoplasm. The protein resides in the nucleus. The catalysed reaction is D-serine = pyruvate + NH4(+). In terms of biological role, catalyzes the conversion of D-serine to pyruvate and ammonia. May play a role in D-serine detoxification. In Schizosaccharomyces pombe (strain 972 / ATCC 24843) (Fission yeast), this protein is D-serine dehydratase.